An 825-amino-acid chain; its full sequence is NT-3 growth factor receptor (825 aa).

The first 31 residues, 1–31, serve as a signal peptide directing secretion; it reads MDVSLCPAKCSFWRIFLLGSVWLDYVGSVLA. 2 disulfide bridges follow: Cys-32–Cys-38 and Cys-36–Cys-45. At 32-429 the chain is on the extracellular side; the sequence is CPANCVCSKT…TVTHKPEEDT (398 aa). Asn-68, Asn-72, and Asn-79 each carry an N-linked (GlcNAc...) asparagine glycan. LRR repeat units follow at residues 104–125 and 128–149; these read GLQK…AFAK and HLRY…LFQT. N-linked (GlcNAc...) asparagine glycans are attached at residues Asn-133 and Asn-163. The region spanning 160 to 209 is the LRRCT domain; it reads NFFNCSCDIRWMQLWQEQGEARLNSQNLYCINADGSQLPLFRMNISQCDL. Disulfide bonds link Cys-164-Cys-189 and Cys-166-Cys-207. Residues Asn-203, Asn-218, Asn-232, Asn-259, Asn-267, Asn-272, and Asn-294 are each glycosylated (N-linked (GlcNAc...) asparagine). Ig-like C2-type domains follow at residues 210–300 and 309–382; these read PEIS…VALT and SLEE…IAKN. Cys-231 and Cys-284 are disulfide-bonded. Cys-320 and Cys-362 form a disulfide bridge. 2 N-linked (GlcNAc...) asparagine glycosylation sites follow: Asn-375 and Asn-388. A helical membrane pass occupies residues 430-453; the sequence is FGVSIAVGLAAFACVLLVVLFIMI. Over 454-825 the chain is Cytoplasmic; the sequence is NKYGRRSKFG…ATPIYLDILG (372 aa). Residue Ser-493 is modified to Phosphoserine. Position 516 is a phosphotyrosine; by autocatalysis (Tyr-516). One can recognise a Protein kinase domain in the interval 538 to 825; that stretch reads IVLKRELGEG…ATPIYLDILG (288 aa). Residues 544 to 552 and Lys-572 each bind ATP; that span reads LGEGAFGKV. Residue Asp-679 is the Proton acceptor of the active site. Residues Tyr-705, Tyr-709, and Tyr-710 each carry the phosphotyrosine; by autocatalysis modification.

Belongs to the protein kinase superfamily. Tyr protein kinase family. Insulin receptor subfamily. In terms of assembly, exists in a dynamic equilibrium between monomeric (low affinity) and dimeric (high affinity) structures. Binds SH2B2. Interacts with SQSTM1 and KIDINS220. Interacts with PTPRS. Interacts with MAPK8IP3/JIP3. In terms of processing, ligand-mediated auto-phosphorylation.

The protein localises to the membrane. It catalyses the reaction L-tyrosyl-[protein] + ATP = O-phospho-L-tyrosyl-[protein] + ADP + H(+). Receptor tyrosine kinase involved in nervous system and probably heart development. Upon binding of its ligand NTF3/neurotrophin-3, NTRK3 autophosphorylates and activates different signaling pathways, including the phosphatidylinositol 3-kinase/AKT and the MAPK pathways, that control cell survival and differentiation. This chain is NT-3 growth factor receptor (NTRK3), found in Saimiri boliviensis boliviensis (Bolivian squirrel monkey).